We begin with the raw amino-acid sequence, 246 residues long: Thaumatin-like protein 1a (246 aa).

An N-terminal signal peptide occupies residues 1-24 (MMKSQVASLLGLTLAILFFSGAHA). Cystine bridges form between Cys-33–Cys-245, Cys-81–Cys-91, Cys-96–Cys-103, Cys-151–Cys-234, Cys-156–Cys-217, Cys-164–Cys-180, Cys-184–Cys-193, and Cys-194–Cys-204.

Belongs to the thaumatin family.

It localises to the secreted. The protein is Thaumatin-like protein 1a (TL1) of Malus domestica (Apple).